The chain runs to 214 residues: Probable transaldolase (214 aa).

Lys83 acts as the Schiff-base intermediate with substrate in catalysis.

This sequence belongs to the transaldolase family. Type 3B subfamily.

It localises to the cytoplasm. The enzyme catalyses D-sedoheptulose 7-phosphate + D-glyceraldehyde 3-phosphate = D-erythrose 4-phosphate + beta-D-fructose 6-phosphate. It functions in the pathway carbohydrate degradation; pentose phosphate pathway; D-glyceraldehyde 3-phosphate and beta-D-fructose 6-phosphate from D-ribose 5-phosphate and D-xylulose 5-phosphate (non-oxidative stage): step 2/3. Transaldolase is important for the balance of metabolites in the pentose-phosphate pathway. In Alkaliphilus metalliredigens (strain QYMF), this protein is Probable transaldolase.